We begin with the raw amino-acid sequence, 855 residues long: uncharacterized protein (855 aa).

10 helical membrane passes run 24–44 (PFQY…IVAI), 256–276 (AFTV…IFLI), 318–338 (IGTG…IGLV), 361–381 (LLKG…PPAI), 404–424 (LMPW…LMLW), 430–450 (LVVA…IAPP), 487–507 (IAIA…ISVG), 725–745 (ITIA…LSAL), 780–800 (MGGM…WILV), and 821–841 (FLRA…YPAW).

The protein belongs to the ABC-4 integral membrane protein family. As to quaternary structure, the complex is probably composed of two ATP-binding proteins (Rv0986) and two transmembrane proteins (Rv0987).

The protein localises to the cell membrane. Functionally, probably part of an ABC transporter complex involved in host cell binding either through secretion of an adherence factor or through maintaining the architecture and integrity of the mycobacterial cell envelope. Could be required for host endothelial-cell invasion and/or intracellular survival. This is an uncharacterized protein from Mycobacterium tuberculosis (strain ATCC 25618 / H37Rv).